We begin with the raw amino-acid sequence, 164 residues long: FMN reductase (NADH) RutF (164 aa).

The protein belongs to the non-flavoprotein flavin reductase family. RutF subfamily.

The enzyme catalyses FMNH2 + NAD(+) = FMN + NADH + 2 H(+). Catalyzes the reduction of FMN to FMNH2 which is used to reduce pyrimidine by RutA via the Rut pathway. In Enterobacter cloacae subsp. cloacae (strain ATCC 13047 / DSM 30054 / NBRC 13535 / NCTC 10005 / WDCM 00083 / NCDC 279-56), this protein is FMN reductase (NADH) RutF.